The primary structure comprises 126 residues: Thiocyanate hydrolase subunit alpha (126 aa).

Heterododecamer consisting of 4 alpha, 4 beta, and 4 gamma subunits.

It carries out the reaction thiocyanate + H2O + 2 H(+) = carbonyl sulfide + NH4(+). Its pathway is organosulfur degradation; thiocyanate degradation. Functionally, involved in the degradation of thiocyanate. The sequence is that of Thiocyanate hydrolase subunit alpha (scnA) from Thiobacillus thioparus.